Reading from the N-terminus, the 385-residue chain is Glucans biosynthesis protein C (385 aa).

10 helical membrane passes run 17 to 37 (AWLM…SHTW), 60 to 80 (MQVF…RYPL), 91 to 111 (VGIP…IMLQ), 137 to 157 (ISHL…VWIF), 173 to 193 (KFSM…YAVI), 212 to 232 (FIVM…LAFI), 239 to 259 (LFTT…VAYL), 274 to 294 (TESV…FSFG), 311 to 331 (ASLF…AYIT), and 338 to 358 (WLGF…LYEI).

It belongs to the acyltransferase 3 family. OpgC subfamily.

The protein resides in the cell membrane. It participates in glycan metabolism; osmoregulated periplasmic glucan (OPG) biosynthesis. Functionally, necessary for the succinyl substitution of periplasmic glucans. Could catalyze the transfer of succinyl residues from the cytoplasmic side of the membrane to the nascent glucan backbones on the periplasmic side of the membrane. The sequence is that of Glucans biosynthesis protein C from Shigella sonnei (strain Ss046).